The primary structure comprises 397 residues: Protein Mx1 (397 aa).

This sequence belongs to the TRAFAC class dynamin-like GTPase superfamily. Dynamin/Fzo/YdjA family.

The sequence is that of Protein Mx1 (Mx1) from Mus musculus (Mouse).